The following is a 163-amino-acid chain: Peptide deformylase 3 (163 aa).

The Fe cation site is built by Cys-91 and His-133. Residue Glu-134 is part of the active site. A Fe cation-binding site is contributed by His-137.

It belongs to the polypeptide deformylase family. It depends on Fe(2+) as a cofactor.

It carries out the reaction N-terminal N-formyl-L-methionyl-[peptide] + H2O = N-terminal L-methionyl-[peptide] + formate. Removes the formyl group from the N-terminal Met of newly synthesized proteins. Requires at least a dipeptide for an efficient rate of reaction. N-terminal L-methionine is a prerequisite for activity but the enzyme has broad specificity at other positions. In Shewanella oneidensis (strain ATCC 700550 / JCM 31522 / CIP 106686 / LMG 19005 / NCIMB 14063 / MR-1), this protein is Peptide deformylase 3.